A 264-amino-acid polypeptide reads, in one-letter code: Thymidylate synthase (264 aa).

R21 is a binding site for dUMP. H51 contacts (6R)-5,10-methylene-5,6,7,8-tetrahydrofolate. 126 to 127 (RR) contacts dUMP. C146 functions as the Nucleophile in the catalytic mechanism. DUMP contacts are provided by residues 166–169 (RSAD), N177, and 207–209 (HLY). Residue D169 coordinates (6R)-5,10-methylene-5,6,7,8-tetrahydrofolate. A263 lines the (6R)-5,10-methylene-5,6,7,8-tetrahydrofolate pocket.

It belongs to the thymidylate synthase family. Bacterial-type ThyA subfamily. In terms of assembly, homodimer.

It localises to the cytoplasm. It catalyses the reaction dUMP + (6R)-5,10-methylene-5,6,7,8-tetrahydrofolate = 7,8-dihydrofolate + dTMP. The protein operates within pyrimidine metabolism; dTTP biosynthesis. Functionally, catalyzes the reductive methylation of 2'-deoxyuridine-5'-monophosphate (dUMP) to 2'-deoxythymidine-5'-monophosphate (dTMP) while utilizing 5,10-methylenetetrahydrofolate (mTHF) as the methyl donor and reductant in the reaction, yielding dihydrofolate (DHF) as a by-product. This enzymatic reaction provides an intracellular de novo source of dTMP, an essential precursor for DNA biosynthesis. The chain is Thymidylate synthase from Hyphomonas neptunium (strain ATCC 15444).